A 564-amino-acid chain; its full sequence is Juvenile hormone esterase (564 aa).

Positions 1 to 19 (MTSHVLALAFLLHACTALA) are cleaved as a signal peptide. Asn-81 carries N-linked (GlcNAc...) asparagine glycosylation. Cys-89 and Cys-109 are oxidised to a cystine. Asn-180 is a glycosylation site (N-linked (GlcNAc...) asparagine). Ser-220 acts as the Acyl-ester intermediate in catalysis. The active-site Charge relay system is the Glu-351. N-linked (GlcNAc...) asparagine glycosylation is present at Asn-402. The active-site Charge relay system is the His-465. A glycan (N-linked (GlcNAc...) asparagine) is linked at Asn-515.

This sequence belongs to the type-B carboxylesterase/lipase family.

It catalyses the reaction juvenile hormone I + H2O = juvenile hormone I carboxylate + methanol + H(+). The catalysed reaction is juvenile hormone III + H2O = juvenile hormone III carboxylate + methanol + H(+). In terms of biological role, JH esterase plays a crucial role in the decrease of JH activity in lepidopteran insects, by hydrolyzing the methyl ester of JH. It is also involved in the transport of JH. This chain is Juvenile hormone esterase, found in Heliothis virescens (Tobacco budworm moth).